The primary structure comprises 1684 residues: A-kinase anchor protein 12 (1684 aa).

The segment at Met-1–Thr-124 is disordered. A lipid anchor (N-myristoyl glycine) is attached at Gly-2. A phosphoserine mark is found at Ser-11, Ser-18, Ser-22, and Ser-27. Residues Gly-30–Ala-48 are compositionally biased toward low complexity. Residues Glu-75–Val-86 show a composition bias toward acidic residues. Positions Val-89–Glu-105 are enriched in basic and acidic residues. Residue Ser-136 is modified to Phosphoserine. Disordered regions lie at residues Ser-175 to Ser-281 and Lys-296 to Tyr-353. Residues Ala-212 to Gly-227 show a composition bias toward basic and acidic residues. Over residues Thr-228–Gly-247 the composition is skewed to polar residues. A phosphoserine mark is found at Ser-234 and Ser-244. Basic and acidic residues predominate over residues Glu-251–Lys-266. An involved in PKC-binding region spans residues Ala-253–Ser-543. Ser-270 and Ser-273 each carry phosphoserine. A compositionally biased stretch (polar residues) spans Ser-270–Ser-281. A compositionally biased stretch (basic and acidic residues) spans Lys-302–Glu-320. Residues Lys-321–Glu-342 show a composition bias toward acidic residues. At Thr-330 the chain carries Phosphothreonine. Residue Ser-350 is modified to Phosphoserine. Position 353 is a phosphotyrosine (Tyr-353). 2 positions are modified to phosphoserine: Ser-371 and Ser-467. The segment at Gly-421–Gly-479 is disordered. A compositionally biased stretch (basic and acidic residues) spans Pro-468–Glu-478. 3 positions are modified to phosphoserine: Ser-489, Ser-505, and Ser-507. The tract at residues Arg-492–Ala-825 is disordered. Residues Gly-497 to Lys-511 show a composition bias toward low complexity. The segment covering Leu-512–Arg-521 has biased composition (basic residues). A phosphoserine mark is found at Ser-540, Ser-543, Ser-584, Ser-598, Ser-613, and Ser-615. The short motif at Ile-593–Ser-613 is the AKAP CaM-binding 1 element. A compositionally biased stretch (basic and acidic residues) spans Arg-611–Lys-625. The span at Ser-626 to Ser-637 shows a compositional bias: low complexity. Phosphothreonine is present on Thr-628. 4 positions are modified to phosphoserine: Ser-630, Ser-631, Ser-634, and Ser-637. Positions Asp-641 to Asp-660 are enriched in basic and acidic residues. Ser-682, Ser-683, and Ser-684 each carry phosphoserine. Residues Asp-696–Asp-710 show a composition bias toward basic and acidic residues. Positions Ala-714–His-723 are enriched in polar residues. The span at Gly-724–Ser-741 shows a compositional bias: low complexity. Residues Ser-733, Ser-745, Ser-767, and Ser-786 each carry the phosphoserine modification. The short motif at Val-740–Leu-760 is the AKAP CaM-binding 2 element. Positions Glu-781–Gly-801 match the AKAP CaM-binding 3 motif. The residue at position 871 (Thr-871) is a Phosphothreonine. Phosphoserine is present on Ser-873. The disordered stretch occupies residues Thr-970–Val-1001. The span at Asp-980–Pro-992 shows a compositional bias: polar residues. Lys-1030 participates in a covalent cross-link: Glycyl lysine isopeptide (Lys-Gly) (interchain with G-Cter in SUMO1). 4 disordered regions span residues Val-1055–Asp-1106, Leu-1121–Glu-1211, Glu-1232–Asp-1365, and Thr-1391–Ile-1492. Residue Ser-1059 is modified to Phosphoserine. Residues Ser-1130 to Val-1176 are compositionally biased toward polar residues. 2 stretches are compositionally biased toward basic and acidic residues: residues Gln-1198 to Leu-1210 and Asp-1239 to Val-1254. At Ser-1292 the chain carries Phosphoserine. Basic and acidic residues predominate over residues Pro-1293–His-1331. Ser-1351, Ser-1355, and Ser-1357 each carry phosphoserine. Over residues Gln-1467–Ile-1492 the composition is skewed to basic and acidic residues. The interval Glu-1501–Ile-1514 is RII-binding. Phosphoserine is present on residues Ser-1546 and Ser-1645. Residues Thr-1568–Ser-1684 form a disordered region. The segment covering Leu-1653–Ser-1684 has biased composition (basic and acidic residues).

As to quaternary structure, binds to dimeric RII-alpha regulatory subunit of PKC. In terms of tissue distribution, isoform 1 is predominantly found in the nervous system. Isoform 3 is testis specific.

It is found in the cytoplasm. It localises to the cytoskeleton. The protein localises to the membrane. Anchoring protein that mediates the subcellular compartmentation of protein kinase A (PKA) and protein kinase C (PKC). This is A-kinase anchor protein 12 (Akap12) from Mus musculus (Mouse).